We begin with the raw amino-acid sequence, 157 residues long: Protein Smg homolog (157 aa).

The protein belongs to the Smg family.

The chain is Protein Smg homolog from Idiomarina loihiensis (strain ATCC BAA-735 / DSM 15497 / L2-TR).